The primary structure comprises 213 residues: Imidazole glycerol phosphate synthase subunit HisH (213 aa).

In terms of domain architecture, Glutamine amidotransferase type-1 spans N4–P211. C82 functions as the Nucleophile in the catalytic mechanism. Residues H186 and E188 contribute to the active site.

Heterodimer of HisH and HisF.

It is found in the cytoplasm. The enzyme catalyses 5-[(5-phospho-1-deoxy-D-ribulos-1-ylimino)methylamino]-1-(5-phospho-beta-D-ribosyl)imidazole-4-carboxamide + L-glutamine = D-erythro-1-(imidazol-4-yl)glycerol 3-phosphate + 5-amino-1-(5-phospho-beta-D-ribosyl)imidazole-4-carboxamide + L-glutamate + H(+). It catalyses the reaction L-glutamine + H2O = L-glutamate + NH4(+). It functions in the pathway amino-acid biosynthesis; L-histidine biosynthesis; L-histidine from 5-phospho-alpha-D-ribose 1-diphosphate: step 5/9. Its function is as follows. IGPS catalyzes the conversion of PRFAR and glutamine to IGP, AICAR and glutamate. The HisH subunit catalyzes the hydrolysis of glutamine to glutamate and ammonia as part of the synthesis of IGP and AICAR. The resulting ammonia molecule is channeled to the active site of HisF. The chain is Imidazole glycerol phosphate synthase subunit HisH from Synechococcus sp. (strain CC9605).